The following is a 178-amino-acid chain: Ribulose bisphosphate carboxylase small subunit, chloroplastic (178 aa).

A chloroplast-targeting transit peptide spans 1–55; that stretch reads MASSMMVSTAAVSRTSPAQSNMVVPFAGLHSSAAFPVTRKFADSSKLPSNGLRVR.

This sequence belongs to the RuBisCO small chain family. In terms of assembly, heterohexadecamer of 8 large and 8 small subunits.

The protein localises to the plastid. The protein resides in the chloroplast. Functionally, ruBisCO catalyzes two reactions: the carboxylation of D-ribulose 1,5-bisphosphate, the primary event in carbon dioxide fixation, as well as the oxidative fragmentation of the pentose substrate. Both reactions occur simultaneously and in competition at the same active site. Although the small subunit is not catalytic it is essential for maximal activity. In Zantedeschia aethiopica (White calla lily), this protein is Ribulose bisphosphate carboxylase small subunit, chloroplastic.